The following is a 916-amino-acid chain: Pertactin autotransporter (916 aa).

The first 37 residues, 1–37 (MNMSLSRIVKAAPLRRTTLAMALGALGALGAAPAAHA), serve as a signal peptide directing secretion. Positions 263 to 265 (RGD) match the Cell attachment site; involved in adhesion to various eukaryotic cell lines motif. Tandem repeats lie at residues 269–273 (GGAVP), 274–278 (GGAVP), and 279–283 (GGAVP). The interval 269–288 (GGAVPGGAVPGGAVPGGFGP) is 4 X 5 AA tandem repeats of G-G-A-V-P. The stretch at 284–288 (GGFGP) is one 4; approximate repeat. The interval 564 to 613 (SLVGAKAPPAPKPAPQPGPQPGPQPPQPPQPPQRQPEAPAPQPPAGRELS) is disordered. Pro residues predominate over residues 571-607 (PPAPKPAPQPGPQPGPQPPQPPQPPQRQPEAPAPQPP). Positions 578–606 (PQPGPQPGPQPPQPPQPPQRQPEAPAPQP) are 6 X 3 AA repeats of P-Q-P. Residues 648–916 (LNPDAGGAWG…TFHAGYRYSW (269 aa)) enclose the Autotransporter domain. The Cell attachment site motif lies at 706–708 (RGD).

In terms of assembly, monomer.

The protein localises to the periplasm. Its subcellular location is the secreted. It is found in the cell surface. It localises to the cell outer membrane. Agglutinogen that binds to eukaryotic cells; a process mediated by the R-G-D sequence. Pertactin may have a role in bacterial adhesion, and thus play a role in virulence. May contribute to the disease state of whooping cough. This chain is Pertactin autotransporter (prn), found in Bordetella bronchiseptica (strain ATCC BAA-588 / NCTC 13252 / RB50) (Alcaligenes bronchisepticus).